A 254-amino-acid chain; its full sequence is Ribosomal RNA small subunit methyltransferase G (254 aa).

Positions 84–109 (NTESKTSLNNAETKNTNEALLTSEPF) are insert. S-adenosyl-L-methionine contacts are provided by residues G115, F120, 171–172 (AE), and R185.

The protein belongs to the methyltransferase superfamily. RNA methyltransferase RsmG family.

The protein localises to the cytoplasm. Functionally, specifically methylates the N7 position of a guanine in 16S rRNA. This Treponema denticola (strain ATCC 35405 / DSM 14222 / CIP 103919 / JCM 8153 / KCTC 15104) protein is Ribosomal RNA small subunit methyltransferase G.